Here is a 598-residue protein sequence, read N- to C-terminus: tRNA(Met) cytidine acetyltransferase TmcA (598 aa).

ATP is bound by residues Gln141, 163–172, and Arg288; that span reads GRGKSTLAGK. In terms of domain architecture, N-acetyltransferase spans 332–490; the sequence is TDLRRLFDAD…HSAMMLYPLS (159 aa). Acetyl-CoA-binding positions include 411–413, 418–424, and Arg462; these read IAV and QNQGIGS.

Belongs to the RNA cytidine acetyltransferase family. TmcA subfamily.

The protein resides in the cytoplasm. The catalysed reaction is cytidine(34) in elongator tRNA(Met) + acetyl-CoA + ATP + H2O = N(4)-acetylcytidine(34) in elongator tRNA(Met) + ADP + phosphate + CoA + H(+). In terms of biological role, catalyzes the formation of N(4)-acetylcytidine (ac(4)C) at the wobble position of tRNA(Met), by using acetyl-CoA as an acetyl donor and ATP (or GTP). This is tRNA(Met) cytidine acetyltransferase TmcA from Haemophilus ducreyi (strain 35000HP / ATCC 700724).